The sequence spans 63 residues: Large ribosomal subunit protein uL29 (63 aa).

Belongs to the universal ribosomal protein uL29 family.

This is Large ribosomal subunit protein uL29 from Bordetella pertussis (strain Tohama I / ATCC BAA-589 / NCTC 13251).